The chain runs to 607 residues: UvrABC system protein C (607 aa).

One can recognise a GIY-YIG domain in the interval His-14–Ile-93. Positions Arg-203–Thr-238 constitute a UVR domain.

This sequence belongs to the UvrC family. Interacts with UvrB in an incision complex.

The protein localises to the cytoplasm. Functionally, the UvrABC repair system catalyzes the recognition and processing of DNA lesions. UvrC both incises the 5' and 3' sides of the lesion. The N-terminal half is responsible for the 3' incision and the C-terminal half is responsible for the 5' incision. The chain is UvrABC system protein C from Desulfotalea psychrophila (strain LSv54 / DSM 12343).